Here is a 249-residue protein sequence, read N- to C-terminus: LexA repressor (249 aa).

The segment at methionine 1–valine 26 is disordered. A compositionally biased stretch (polar residues) spans arginine 9–proline 18. Positions methionine 48–serine 68 form a DNA-binding region, H-T-H motif. Catalysis depends on for autocatalytic cleavage activity residues serine 173 and lysine 210.

The protein belongs to the peptidase S24 family. As to quaternary structure, homodimer.

It catalyses the reaction Hydrolysis of Ala-|-Gly bond in repressor LexA.. Functionally, represses a number of genes involved in the response to DNA damage (SOS response), including recA and lexA. In the presence of single-stranded DNA, RecA interacts with LexA causing an autocatalytic cleavage which disrupts the DNA-binding part of LexA, leading to derepression of the SOS regulon and eventually DNA repair. The polypeptide is LexA repressor (Arthrobacter sp. (strain FB24)).